A 405-amino-acid polypeptide reads, in one-letter code: MRFFPILCLVLFISHGVASRRHSHSKKKKAKESSVGAVGPPSSKDFAFRLYRALVSESPGQNVFFSPLSVSMSLGMLSLGAGLKTKTQILDGLGLSLQQGQEDKLHKGFQQLLQRFRQPSDGLQLSLGSALFKDPAVHIRDDFLSAMKTLYMSDTFSTNFGNPEIAKKQINNYVAKQTKGKIVDFIKDLDSTHVMIVVNYIFFKAKWQTAFSETNTHKMDFHVTPKRTTQVPMMNREDGYSYYLDQNISCTVVGIPYQGNAIALFILPSEGKMKQVEDGLDERTLRNWLKMFTKRRLDLYLPKFSIEATYKLENVLPKLGIQDVFTTHADLSGITDHTNIKLSEMVHKSMMEVEESGTTAAAITGAIFTFRSARPSSLKIEFTRPFLLTLMEDSHILFVGKVTRP.

A signal peptide spans 1 to 19; sequence MRFFPILCLVLFISHGVAS. The propeptide at 20–24 is removed in mature form; sequence RRHSH. Asparagine 247 is a glycosylation site (N-linked (GlcNAc...) asparagine).

Belongs to the serpin family. Forms protease inhibiting heterodimers in extracellular body fluids with serine proteases such as activated protein C/coagulation factor V/F5, acrosin/ACR, chymotrypsinogen B/CTRB1, prothrombin/F2, factor Xa/F10, factor XI/F11, kallikrein/KLKB1, tissue kallikrein, trypsin/PRSS1, prostate specific antigen/KLK3, tissue plasminogen activator/PLAT and urinary plasminogen activator/PLAU. Forms membrane-anchored serine proteases inhibiting heterodimers with TMPRSS7 and TMPRSS11E. Interacts with SEMG2. N-glycosylated; glycans consist of a mixture of sialylated bi- (including sialyl-Lewis X epitopes), tri- and tetra-antennary complex-type chains; affects the maximal heparin- and thrombomodulin-enhanced rates of thrombin inhibition. O-glycosylated; further modified with 2 sialic acid residues. Proteolytically cleaved at the N-terminus; inhibits slightly the heparin- and thrombomodulin-enhanced rates of thrombin inhibition. In terms of processing, proteolytically cleaved. Inhibition of proteases is accompanied by formation of a stable enzyme-inhibitor complex and by degradation of the serpin to lower molecular weight derivatives. In terms of tissue distribution, not detected in blood plasma (at protein level). Expressed in testis, epididymis, seminal vesicles, prostate and ovaries.

The protein resides in the secreted. It is found in the extracellular space. Its inhibitory activity is greatly enhanced in the presence of glycosaminoglycans, heparin, thrombomodulin and phospholipids vesicles. Heparin-dependent serine protease inhibitor acting in body fluids and secretions. Inactivates serine proteases by binding irreversibly to their serine activation site. Involved in the regulation of intravascular and extravascular proteolytic activities. Plays hemostatic roles in the blood plasma. Acts as a procoagulant and pro-inflammatory factor by inhibiting the anticoagulant activated protein C factor as well as the generation of activated protein C factor by the thrombin/thrombomodulin complex. Acts as an anticoagulant factor by inhibiting blood coagulation factors like prothrombin, factor XI, factor Xa, plasma kallikrein and fibrinolytic enzymes such as tissue- and urinary-type plasminogen activators. In seminal plasma, inactivates several serine proteases implicated in the reproductive system. Inhibits the serpin acrosin; indirectly protects component of the male genital tract from being degraded by excessive released acrosin. Inhibits tissue- and urinary-type plasminogen activator, prostate-specific antigen and kallikrein activities; has a control on the sperm motility and fertilization. Inhibits the activated protein C-catalyzed degradation of SEMG1 and SEMG2; regulates the degradation of semenogelin during the process of transfer of spermatozoa from the male reproductive tract into the female tract. In urine, inhibits urinary-type plasminogen activator and kallikrein activities. Inactivates membrane-anchored serine proteases activities such as MPRSS7 and TMPRSS11E. Inhibits urinary-type plasminogen activator-dependent tumor cell invasion and metastasis. May also play a non-inhibitory role in seminal plasma and urine as a hydrophobic hormone carrier by its binding to retinoic acid. This Mus musculus (Mouse) protein is Plasma serine protease inhibitor (Serpina5).